A 252-amino-acid polypeptide reads, in one-letter code: UPF0736 protein OB1207 (252 aa).

The protein belongs to the UPF0736 family.

The sequence is that of UPF0736 protein OB1207 from Oceanobacillus iheyensis (strain DSM 14371 / CIP 107618 / JCM 11309 / KCTC 3954 / HTE831).